The sequence spans 692 residues: Elongation factor G (692 aa).

Positions 8 to 282 (ENTRNIGIMA…AVIDYLPSPL (275 aa)) constitute a tr-type G domain. GTP is bound by residues 17-24 (AHIDAGKT), 81-85 (DTPGH), and 135-138 (NKMD).

The protein belongs to the TRAFAC class translation factor GTPase superfamily. Classic translation factor GTPase family. EF-G/EF-2 subfamily.

The protein resides in the cytoplasm. Its function is as follows. Catalyzes the GTP-dependent ribosomal translocation step during translation elongation. During this step, the ribosome changes from the pre-translocational (PRE) to the post-translocational (POST) state as the newly formed A-site-bound peptidyl-tRNA and P-site-bound deacylated tRNA move to the P and E sites, respectively. Catalyzes the coordinated movement of the two tRNA molecules, the mRNA and conformational changes in the ribosome. The chain is Elongation factor G from Bacillus cereus (strain G9842).